A 303-amino-acid polypeptide reads, in one-letter code: Serine/threonine-protein phosphatase PP-X homolog 1 (303 aa).

Mn(2+)-binding residues include D51, H53, D79, and N111. Catalysis depends on H112, which acts as the Proton donor. Residues H161 and H235 each coordinate Mn(2+).

It belongs to the PPP phosphatase family. PP-4 (PP-X) subfamily. Mn(2+) serves as cofactor.

It catalyses the reaction O-phospho-L-seryl-[protein] + H2O = L-seryl-[protein] + phosphate. The enzyme catalyses O-phospho-L-threonyl-[protein] + H2O = L-threonyl-[protein] + phosphate. The polypeptide is Serine/threonine-protein phosphatase PP-X homolog 1 (Ppx1) (Paramecium tetraurelia).